The primary structure comprises 157 residues: Succinate dehydrogenase [ubiquinone] cytochrome b small subunit, mitochondrial (157 aa).

Residues 1 to 45 (MAALVLLRAGLARPRGVPTALLRGTLLRHSAVLTAAADRSAPARQ) constitute a mitochondrion transit peptide. The Mitochondrial matrix segment spans residues 46–61 (SHGGAPQGHGSSKAAS). A helical transmembrane segment spans residues 62-83 (LHWTSERAVSALLLGLLPAAYL). Topologically, residues 84–88 (YPGPA) are mitochondrial intermembrane. Residues 89–109 (VDYSLAAALTLHGHWGLGQVI) traverse the membrane as a helical segment. His100 contributes to the heme b binding site. Residues 110-118 (TDYVHGDTP) lie on the Mitochondrial matrix side of the membrane. Tyr112 is a binding site for a ubiquinone. The chain crosses the membrane as a helical span at residues 119–140 (IKVANTGLYVLSAITFTGLCYF). The Mitochondrial intermembrane portion of the chain corresponds to 141 to 157 (NYYDVGICKAVAMLWSI).

The protein belongs to the CybS family. As to quaternary structure, component of complex II composed of four subunits: the flavoprotein (FP) SDHA, iron-sulfur protein (IP) SDHB, and a cytochrome b560 composed of SDHC and SDHD.

The protein resides in the mitochondrion inner membrane. It functions in the pathway carbohydrate metabolism; tricarboxylic acid cycle. Functionally, membrane-anchoring subunit of succinate dehydrogenase (SDH) that is involved in complex II of the mitochondrial electron transport chain and is responsible for transferring electrons from succinate to ubiquinone (coenzyme Q). SDH also oxidizes malate to the non-canonical enol form of oxaloacetate, enol-oxaloacetate. Enol-oxaloacetate, which is a potent inhibitor of the succinate dehydrogenase activity, is further isomerized into keto-oxaloacetate. The sequence is that of Succinate dehydrogenase [ubiquinone] cytochrome b small subunit, mitochondrial (SDHD) from Gallus gallus (Chicken).